The following is a 393-amino-acid chain: GDSL esterase/lipase At1g28600 (393 aa).

The first 22 residues, 1–22, serve as a signal peptide directing secretion; sequence MASLDSLVIFLFSTLFVTIVSS. Serine 38 (nucleophile) is an active-site residue. N-linked (GlcNAc...) asparagine glycosylation is found at asparagine 133 and asparagine 317. Residues aspartate 340 and histidine 343 contribute to the active site. N-linked (GlcNAc...) asparagine glycosylation occurs at asparagine 382.

The protein belongs to the 'GDSL' lipolytic enzyme family.

Its subcellular location is the secreted. The chain is GDSL esterase/lipase At1g28600 from Arabidopsis thaliana (Mouse-ear cress).